A 639-amino-acid chain; its full sequence is Putative oxidoreductase UacF (639 aa).

4Fe-4S ferredoxin-type domains are found at residues 3–32, 47–77, 78–107, 110–139, and 201–235; these read KFIAAEAAECIGCHACEIACAVAHNQENWP, KGQAANPVACHHCNNAPCVTACPVNALTFQS, DSVQLDEQKCIGCKRCAIACPFGVVEMVDT, QKCDLCNQRSSGTQACIEVCPTQALRLMDD, and QQATYESDRCVYCAEKANCNWHCPLHNAIPDYIRL. Residues Cys-12, Cys-15, Cys-18, Cys-22, Cys-56, Cys-59, Cys-64, Cys-68, Cys-87, Cys-90, Cys-93, Cys-97, Cys-112, Cys-115, Cys-125, Cys-129, Cys-210, Cys-213, Cys-219, and Cys-223 each contribute to the [4Fe-4S] cluster site.

[4Fe-4S] cluster serves as cofactor.

Involved in formate-dependent uric acid degradation under microaerobic and anaerobic conditions. May reduce the enzymes necessary for uric acid degradation. This is Putative oxidoreductase UacF from Escherichia coli (strain K12).